A 269-amino-acid chain; its full sequence is Cytochrome c oxidase subunit 3 (269 aa).

The next 7 membrane-spanning stretches (helical) occupy residues 24-44 (LFTSISLFILTTATVLFMHGF), 46-66 (GFQYLVPVAVINVMYVMGLWF), 90-110 (GVGLFIISEVFFFLAIFWAFF), 138-160 (PLLNTIILLSSGVTITYAHHSLI), 167-187 (ALYGTVVTILLAIVFTFFQGV), 207-227 (FGTGFHGLHVIIGTAFLAVGL), and 247-267 (ILYWHFVDVVWLFLYISVYYW).

The protein belongs to the cytochrome c oxidase subunit 3 family. Component of the cytochrome c oxidase (complex IV, CIV), a multisubunit enzyme composed of a catalytic core of 3 subunits and several supernumerary subunits. The complex exists as a monomer or a dimer and forms supercomplexes (SCs) in the inner mitochondrial membrane with ubiquinol-cytochrome c oxidoreductase (cytochrome b-c1 complex, complex III, CIII).

The protein resides in the mitochondrion inner membrane. It catalyses the reaction 4 Fe(II)-[cytochrome c] + O2 + 8 H(+)(in) = 4 Fe(III)-[cytochrome c] + 2 H2O + 4 H(+)(out). Component of the cytochrome c oxidase, the last enzyme in the mitochondrial electron transport chain which drives oxidative phosphorylation. The respiratory chain contains 3 multisubunit complexes succinate dehydrogenase (complex II, CII), ubiquinol-cytochrome c oxidoreductase (cytochrome b-c1 complex, complex III, CIII) and cytochrome c oxidase (complex IV, CIV), that cooperate to transfer electrons derived from NADH and succinate to molecular oxygen, creating an electrochemical gradient over the inner membrane that drives transmembrane transport and the ATP synthase. Cytochrome c oxidase is the component of the respiratory chain that catalyzes the reduction of oxygen to water. Electrons originating from reduced cytochrome c in the intermembrane space (IMS) are transferred via the dinuclear copper A center (CU(A)) of subunit 2 and heme A of subunit 1 to the active site in subunit 1, a binuclear center (BNC) formed by heme A3 and copper B (CU(B)). The BNC reduces molecular oxygen to 2 water molecules using 4 electrons from cytochrome c in the IMS and 4 protons from the mitochondrial matrix. This is Cytochrome c oxidase subunit 3 (cox3) from Emericella nidulans (Aspergillus nidulans).